The following is a 621-amino-acid chain: 1-deoxy-D-xylulose-5-phosphate synthase (621 aa).

Residues H80 and 121–123 contribute to the thiamine diphosphate site; that span reads GHS. D152 lines the Mg(2+) pocket. Thiamine diphosphate-binding positions include 153–154, N181, Y288, and E370; that span reads GA. N181 is a Mg(2+) binding site.

It belongs to the transketolase family. DXPS subfamily. As to quaternary structure, homodimer. Mg(2+) is required as a cofactor. Requires thiamine diphosphate as cofactor.

It carries out the reaction D-glyceraldehyde 3-phosphate + pyruvate + H(+) = 1-deoxy-D-xylulose 5-phosphate + CO2. It participates in metabolic intermediate biosynthesis; 1-deoxy-D-xylulose 5-phosphate biosynthesis; 1-deoxy-D-xylulose 5-phosphate from D-glyceraldehyde 3-phosphate and pyruvate: step 1/1. Catalyzes the acyloin condensation reaction between C atoms 2 and 3 of pyruvate and glyceraldehyde 3-phosphate to yield 1-deoxy-D-xylulose-5-phosphate (DXP). The polypeptide is 1-deoxy-D-xylulose-5-phosphate synthase (Erwinia tasmaniensis (strain DSM 17950 / CFBP 7177 / CIP 109463 / NCPPB 4357 / Et1/99)).